The following is a 270-amino-acid chain: Formamidopyrimidine-DNA glycosylase (270 aa).

The active-site Schiff-base intermediate with DNA is the Pro2. The active-site Proton donor is Glu3. The active-site Proton donor; for beta-elimination activity is the Lys58. DNA is bound by residues His91, Arg110, and Arg151. An FPG-type zinc finger spans residues 236-270 (AVYGREGEPCTHCGAPLQGVRIGGRATIYCSQCQR). Residue Arg260 is the Proton donor; for delta-elimination activity of the active site.

It belongs to the FPG family. Monomer. Requires Zn(2+) as cofactor.

It catalyses the reaction Hydrolysis of DNA containing ring-opened 7-methylguanine residues, releasing 2,6-diamino-4-hydroxy-5-(N-methyl)formamidopyrimidine.. The enzyme catalyses 2'-deoxyribonucleotide-(2'-deoxyribose 5'-phosphate)-2'-deoxyribonucleotide-DNA = a 3'-end 2'-deoxyribonucleotide-(2,3-dehydro-2,3-deoxyribose 5'-phosphate)-DNA + a 5'-end 5'-phospho-2'-deoxyribonucleoside-DNA + H(+). Functionally, involved in base excision repair of DNA damaged by oxidation or by mutagenic agents. Acts as a DNA glycosylase that recognizes and removes damaged bases. Has a preference for oxidized purines, such as 7,8-dihydro-8-oxoguanine (8-oxoG). Has AP (apurinic/apyrimidinic) lyase activity and introduces nicks in the DNA strand. Cleaves the DNA backbone by beta-delta elimination to generate a single-strand break at the site of the removed base with both 3'- and 5'-phosphates. In Acidithiobacillus ferrooxidans (strain ATCC 23270 / DSM 14882 / CIP 104768 / NCIMB 8455) (Ferrobacillus ferrooxidans (strain ATCC 23270)), this protein is Formamidopyrimidine-DNA glycosylase.